We begin with the raw amino-acid sequence, 260 residues long: MTILSEIVKYKQSLLQNGYYQDKLNTLKSVKIQNKKSFINAIEKEPKLAIIAEIKSKSPTVNDLPERDLSQQISDYDQYGANAVSILTDEKYFSGSFERLQALTTKTTLPVLCKDFIIDPLQIDVAKQAGASMILLIVNILSDKQLKDLYNYAISQNLEVLVEVHDRHELERAYKVNAKLIGVNNRDLKRFVTNVEHTNTILENKKTNHYYISESGIHDASDVRKILHSGIDGLLIGEALMRCDNLSEFLPQLKMQKVKS.

This sequence belongs to the TrpC family.

It catalyses the reaction 1-(2-carboxyphenylamino)-1-deoxy-D-ribulose 5-phosphate + H(+) = (1S,2R)-1-C-(indol-3-yl)glycerol 3-phosphate + CO2 + H2O. The protein operates within amino-acid biosynthesis; L-tryptophan biosynthesis; L-tryptophan from chorismate: step 4/5. The protein is Indole-3-glycerol phosphate synthase of Staphylococcus aureus (strain COL).